The chain runs to 348 residues: Ion-translocating oxidoreductase complex subunit D (348 aa).

5 helical membrane-spanning segments follow: residues 15 to 35, 36 to 56, 67 to 87, 88 to 108, and 125 to 145; these read LTAK…GMQA, YFFG…AVAI, PTAF…LAIS, IPPY…LLLA, and VAYA…LVPI. Thr186 carries the post-translational modification FMN phosphoryl threonine. Helical transmembrane passes span 212–232, 241–261, 265–285, 298–318, and 320–340; these read LFAN…LLLI, IPAA…LLLP, LNVV…FIAT, LIFG…GNYP, and AVAF…HYTQ.

The protein belongs to the NqrB/RnfD family. As to quaternary structure, the complex is composed of six subunits: RnfA, RnfB, RnfC, RnfD, RnfE and RnfG. The cofactor is FMN.

Its subcellular location is the cell inner membrane. Functionally, part of a membrane-bound complex that couples electron transfer with translocation of ions across the membrane. This chain is Ion-translocating oxidoreductase complex subunit D, found in Actinobacillus pleuropneumoniae serotype 5b (strain L20).